Consider the following 60-residue polypeptide: Large ribosomal subunit protein uL30 (60 aa).

It belongs to the universal ribosomal protein uL30 family. In terms of assembly, part of the 50S ribosomal subunit.

The chain is Large ribosomal subunit protein uL30 from Carboxydothermus hydrogenoformans (strain ATCC BAA-161 / DSM 6008 / Z-2901).